The following is a 500-amino-acid chain: Glutamyl-tRNA(Gln) amidotransferase subunit A (500 aa).

Catalysis depends on charge relay system residues K93 and S168. S192 (acyl-ester intermediate) is an active-site residue.

Belongs to the amidase family. GatA subfamily. Heterotrimer of A, B and C subunits.

It catalyses the reaction L-glutamyl-tRNA(Gln) + L-glutamine + ATP + H2O = L-glutaminyl-tRNA(Gln) + L-glutamate + ADP + phosphate + H(+). Allows the formation of correctly charged Gln-tRNA(Gln) through the transamidation of misacylated Glu-tRNA(Gln) in organisms which lack glutaminyl-tRNA synthetase. The reaction takes place in the presence of glutamine and ATP through an activated gamma-phospho-Glu-tRNA(Gln). This chain is Glutamyl-tRNA(Gln) amidotransferase subunit A, found in Corynebacterium jeikeium (strain K411).